Reading from the N-terminus, the 249-residue chain is Orotidine 5'-phosphate decarboxylase (249 aa).

Substrate is bound by residues Asp-21, Lys-43, 72–81, Thr-128, Arg-193, Gln-204, Gly-224, and Arg-225; that span reads DLKLYDIPET. Residue Lys-74 is the Proton donor of the active site.

It belongs to the OMP decarboxylase family. Type 1 subfamily. As to quaternary structure, homodimer.

It catalyses the reaction orotidine 5'-phosphate + H(+) = UMP + CO2. Its pathway is pyrimidine metabolism; UMP biosynthesis via de novo pathway; UMP from orotate: step 2/2. Its function is as follows. Catalyzes the decarboxylation of orotidine 5'-monophosphate (OMP) to uridine 5'-monophosphate (UMP). This is Orotidine 5'-phosphate decarboxylase from Desulfosudis oleivorans (strain DSM 6200 / JCM 39069 / Hxd3) (Desulfococcus oleovorans).